Reading from the N-terminus, the 266-residue chain is Glutamate racemase (266 aa).

Substrate-binding positions include 9–10 and 41–42; these read DS and YG. The active-site Proton donor/acceptor is cysteine 73. 74-75 is a substrate binding site; sequence NS. The active-site Proton donor/acceptor is the cysteine 183. 184-185 contacts substrate; sequence TH.

Belongs to the aspartate/glutamate racemases family.

It carries out the reaction L-glutamate = D-glutamate. The protein operates within cell wall biogenesis; peptidoglycan biosynthesis. Provides the (R)-glutamate required for cell wall biosynthesis. The sequence is that of Glutamate racemase from Shewanella halifaxensis (strain HAW-EB4).